The sequence spans 198 residues: Clytin (198 aa).

A propeptide spanning residues 1–9 (MADTASKYA) is cleaved from the precursor. EF-hand domains follow at residues 20–55 (KWVNRHKFMFNFLDINGDGKITLDEIVSKASDDICA), 60–95 (TPEQTKRHQDAVEAFFKKIGMDYGKEVEFPAFVDGW), 119–148 (EAVFDIFDKDGSGSISLDEWKAYGRISGIC), and 149–184 (SSDEDAEKTFKHCDLDNSGKLDVDEMTRQHLGFWYT). Residues D33, N35, D37, K39, and E44 each contribute to the Ca(2+) site. The Ca(2+) site is built by D126, D128, S130, S132, E137, D162, D164, S166, K168, and E173.

This sequence belongs to the aequorin family.

Ca(2+)-dependent bioluminescence photoprotein. Displays an emission peak at 470 nm (blue light). Trace amounts of calcium ion trigger the intramolecular oxidation of the chromophore, coelenterazine into coelenteramide and CO(2) with the concomitant emission of light. This Clytia gregaria (Gregarious jellyfish) protein is Clytin.